Here is a 227-residue protein sequence, read N- to C-terminus: uncharacterized protein (227 aa).

The next 5 helical transmembrane spans lie at A27–L47, P63–G83, T126–V146, V153–G173, and F186–A206.

The protein belongs to the DedA family.

The protein resides in the cell membrane. This is an uncharacterized protein from Mycobacterium tuberculosis (strain CDC 1551 / Oshkosh).